The chain runs to 159 residues: Transcription elongation factor GreA (159 aa).

The protein belongs to the GreA/GreB family.

Necessary for efficient RNA polymerase transcription elongation past template-encoded arresting sites. The arresting sites in DNA have the property of trapping a certain fraction of elongating RNA polymerases that pass through, resulting in locked ternary complexes. Cleavage of the nascent transcript by cleavage factors such as GreA or GreB allows the resumption of elongation from the new 3'terminus. GreA releases sequences of 2 to 3 nucleotides. The chain is Transcription elongation factor GreA from Buchnera aphidicola subsp. Cinara cedri (strain Cc).